Consider the following 478-residue polypeptide: ATP synthase subunit beta (478 aa).

ATP is bound at residue 158-165 (GGAGVGKT).

The protein belongs to the ATPase alpha/beta chains family. F-type ATPases have 2 components, CF(1) - the catalytic core - and CF(0) - the membrane proton channel. CF(1) has five subunits: alpha(3), beta(3), gamma(1), delta(1), epsilon(1). CF(0) has three main subunits: a(1), b(2) and c(9-12). The alpha and beta chains form an alternating ring which encloses part of the gamma chain. CF(1) is attached to CF(0) by a central stalk formed by the gamma and epsilon chains, while a peripheral stalk is formed by the delta and b chains.

The protein resides in the cell inner membrane. The catalysed reaction is ATP + H2O + 4 H(+)(in) = ADP + phosphate + 5 H(+)(out). Produces ATP from ADP in the presence of a proton gradient across the membrane. The catalytic sites are hosted primarily by the beta subunits. The protein is ATP synthase subunit beta of Rhizobium johnstonii (strain DSM 114642 / LMG 32736 / 3841) (Rhizobium leguminosarum bv. viciae).